The chain runs to 432 residues: Alcohol acyltransferase 9 (432 aa).

Active-site proton acceptor residues include His156 and Asp379.

The protein belongs to the plant acyltransferase family. Expressed in fruit.

The catalysed reaction is 2-(methylsulfanyl)acetyl-CoA + butan-1-ol = butyl 2-(methylsulfanyl)acetate + CoA. It carries out the reaction ethanol + acetyl-CoA = ethyl acetate + CoA. It catalyses the reaction butan-1-ol + acetyl-CoA = butyl acetate + CoA. The enzyme catalyses butan-1-ol + propanoyl-CoA = butyl propanoate + CoA. Involved in the biosynthesis of volatile esters which confer kiwifruit flavor. Alcohol acyl transferase that can use a wide range of alcohols as substrate to produce esters. Exhibits acetyl-CoA:alcohol O-acyltransferase activity. This chain is Alcohol acyltransferase 9, found in Actinidia deliciosa (Kiwi).